Here is an 809-residue protein sequence, read N- to C-terminus: ATP-dependent RNA helicase HrpB (809 aa).

The 164-residue stretch at 14–177 (LTALDCAPQV…LPEAPVVISE (164 aa)) folds into the Helicase ATP-binding domain. Position 27 to 34 (27 to 34 (APTGAGKS)) interacts with ATP. A DEFH box motif is present at residues 123–126 (DEFH). One can recognise a Helicase C-terminal domain in the interval 195–368 (RFDDAVAVAT…GLLMELLQWG (174 aa)). A disordered region spans residues 788 to 809 (PKHVWPDDPANTAPTRRTKKYS).

This sequence belongs to the DEAD box helicase family.

It carries out the reaction ATP + H2O = ADP + phosphate + H(+). The polypeptide is ATP-dependent RNA helicase HrpB (hrpB) (Escherichia coli (strain K12)).